The sequence spans 284 residues: MTIVNLAAYHFVSLDANEQWRPLVTARCNELGLRGTILLAPEGINLFIAGTREATDAFIAYIRHDPLFEGKFATLQFKESLSDSQPFRRMLVRLKREIITMKKPAIKPELGRAPFVDARTLKAWLDRGHDDAGRPVVMLDTRNAFEVDVGTFDNALDYRIDKFSEFPEVIDANRADLEGKTVVSFCTGGIRCEKAAIHMKEIGIDNVYQLEGGILKYFEEVGGAHYHGDCFVFDYRTALNPQLQPTENVTCFACRAVVTPEAQQSPSYVPGKSCPACPQAASAA.

In terms of domain architecture, Rhodanese spans 132 to 226 (AGRPVVMLDT…YFEEVGGAHY (95 aa)). C186 acts as the Cysteine persulfide intermediate in catalysis.

The protein belongs to the TrhO family.

It carries out the reaction uridine(34) in tRNA + AH2 + O2 = 5-hydroxyuridine(34) in tRNA + A + H2O. Catalyzes oxygen-dependent 5-hydroxyuridine (ho5U) modification at position 34 in tRNAs. This is tRNA uridine(34) hydroxylase from Burkholderia cenocepacia (strain HI2424).